Consider the following 421-residue polypeptide: Histidine--tRNA ligase (421 aa).

It belongs to the class-II aminoacyl-tRNA synthetase family. As to quaternary structure, homodimer.

The protein resides in the cytoplasm. The catalysed reaction is tRNA(His) + L-histidine + ATP = L-histidyl-tRNA(His) + AMP + diphosphate + H(+). This chain is Histidine--tRNA ligase, found in Alkaliphilus oremlandii (strain OhILAs) (Clostridium oremlandii (strain OhILAs)).